An 81-amino-acid chain; its full sequence is ATP synthase subunit c, chloroplastic (81 aa).

Helical transmembrane passes span 3-23 and 57-77; these read PIIS…ASIG and LAFM…LLFA.

It belongs to the ATPase C chain family. As to quaternary structure, F-type ATPases have 2 components, F(1) - the catalytic core - and F(0) - the membrane proton channel. F(1) has five subunits: alpha(3), beta(3), gamma(1), delta(1), epsilon(1). F(0) has four main subunits: a(1), b(1), b'(1) and c(10-14). The alpha and beta chains form an alternating ring which encloses part of the gamma chain. F(1) is attached to F(0) by a central stalk formed by the gamma and epsilon chains, while a peripheral stalk is formed by the delta, b and b' chains.

It is found in the plastid. The protein resides in the chloroplast thylakoid membrane. In terms of biological role, f(1)F(0) ATP synthase produces ATP from ADP in the presence of a proton or sodium gradient. F-type ATPases consist of two structural domains, F(1) containing the extramembraneous catalytic core and F(0) containing the membrane proton channel, linked together by a central stalk and a peripheral stalk. During catalysis, ATP synthesis in the catalytic domain of F(1) is coupled via a rotary mechanism of the central stalk subunits to proton translocation. Its function is as follows. Key component of the F(0) channel; it plays a direct role in translocation across the membrane. A homomeric c-ring of between 10-14 subunits forms the central stalk rotor element with the F(1) delta and epsilon subunits. In Welwitschia mirabilis (Tree tumbo), this protein is ATP synthase subunit c, chloroplastic.